We begin with the raw amino-acid sequence, 240 residues long: 2,3,4,5-tetrahydropyridine-2,6-dicarboxylate N-acetyltransferase (240 aa).

This sequence belongs to the transferase hexapeptide repeat family. DapH subfamily.

The enzyme catalyses (S)-2,3,4,5-tetrahydrodipicolinate + acetyl-CoA + H2O = L-2-acetamido-6-oxoheptanedioate + CoA. Its pathway is amino-acid biosynthesis; L-lysine biosynthesis via DAP pathway; LL-2,6-diaminopimelate from (S)-tetrahydrodipicolinate (acetylase route): step 1/3. Functionally, catalyzes the transfer of an acetyl group from acetyl-CoA to tetrahydrodipicolinate. The sequence is that of 2,3,4,5-tetrahydropyridine-2,6-dicarboxylate N-acetyltransferase from Bacillus cereus (strain G9842).